The following is a 184-amino-acid chain: Inosine triphosphate pyrophosphatase (184 aa).

Residue 9–14 (TSNASK) coordinates ITP. Residue glutamate 38 coordinates Mg(2+). ITP is bound by residues lysine 50, 66–67 (DT), lysine 83, 142–145 (FGWD), lysine 163, and 168–169 (HR).

This sequence belongs to the HAM1 NTPase family. In terms of assembly, homodimer. Requires Mg(2+) as cofactor. The cofactor is Mn(2+).

Its subcellular location is the cytoplasm. It localises to the nucleus. It carries out the reaction ITP + H2O = IMP + diphosphate + H(+). The enzyme catalyses dITP + H2O = dIMP + diphosphate + H(+). It catalyses the reaction XTP + H2O = XMP + diphosphate + H(+). Pyrophosphatase that hydrolyzes non-canonical purine nucleotides such as inosine triphosphate (ITP), deoxyinosine triphosphate (dITP) or xanthosine 5'-triphosphate (XTP) to their respective monophosphate derivatives. The enzyme does not distinguish between the deoxy- and ribose forms. Probably excludes non-canonical purines from RNA and DNA precursor pools, thus preventing their incorporation into RNA and DNA and avoiding chromosomal lesions. This chain is Inosine triphosphate pyrophosphatase, found in Tuber melanosporum (strain Mel28) (Perigord black truffle).